We begin with the raw amino-acid sequence, 361 residues long: Phosphoserine aminotransferase (361 aa).

Arg-42 is an L-glutamate binding site. Pyridoxal 5'-phosphate contacts are provided by residues 76 to 77 (AT), Trp-102, Thr-152, Asp-172, and Gln-195. An N6-(pyridoxal phosphate)lysine modification is found at Lys-196. A pyridoxal 5'-phosphate-binding site is contributed by 237-238 (NT).

It belongs to the class-V pyridoxal-phosphate-dependent aminotransferase family. SerC subfamily. In terms of assembly, homodimer. Pyridoxal 5'-phosphate is required as a cofactor.

It localises to the cytoplasm. The catalysed reaction is O-phospho-L-serine + 2-oxoglutarate = 3-phosphooxypyruvate + L-glutamate. It catalyses the reaction 4-(phosphooxy)-L-threonine + 2-oxoglutarate = (R)-3-hydroxy-2-oxo-4-phosphooxybutanoate + L-glutamate. The protein operates within amino-acid biosynthesis; L-serine biosynthesis; L-serine from 3-phospho-D-glycerate: step 2/3. It functions in the pathway cofactor biosynthesis; pyridoxine 5'-phosphate biosynthesis; pyridoxine 5'-phosphate from D-erythrose 4-phosphate: step 3/5. Catalyzes the reversible conversion of 3-phosphohydroxypyruvate to phosphoserine and of 3-hydroxy-2-oxo-4-phosphonooxybutanoate to phosphohydroxythreonine. The sequence is that of Phosphoserine aminotransferase from Xanthomonas campestris pv. campestris (strain 8004).